The primary structure comprises 342 residues: Inactive chitinase-like protein 2 (342 aa).

An N-terminal signal peptide occupies residues 1–19 (MKEIVRALEGYGPPKDKAA). In terms of domain architecture, Chitin-binding type-1 spans 20–60 (EQCGWQAGGALCPGGLCCSQYGWCANTPEYCGSGCQSQCDG). 7 cysteine pairs are disulfide-bonded: Cys-22–Cys-37, Cys-31–Cys-43, Cys-36–Cys-80, Cys-84–Cys-88, Cys-122–Cys-184, Cys-196–Cys-204, and Cys-301–Cys-333.

The protein belongs to the glycosyl hydrolase 19 family. Chitinase class I subfamily.

Its function is as follows. Inactive chitinase-like protein that does not exhibit hydrolytic activity toward chitin. Binds strongly to chitin and possesses antifungal activity toward the fungal pathogen Altenaria alternata in plate assays. Probably involved in defense against fungal pathogens through a mechanism that only involves carbohydrate binding. The chain is Inactive chitinase-like protein 2 from Hevea brasiliensis (Para rubber tree).